A 208-amino-acid polypeptide reads, in one-letter code: HTLV-1 basic zipper factor (208 aa).

Residues 59–93 are disordered; the sequence is RLRWGPVGEEAPPRGETHRDRQRRAEEKRKRKRER. Positions 69-86 are enriched in basic and acidic residues; it reads APPRGETHRDRQRRAEEK. 3 short sequence motifs (nuclear localization signal) span residues 86–91, 115–119, and 136–140; these read KRKRKR, RRRRA, and RRERK. The segment covering 125-143 has biased composition (basic and acidic residues); the sequence is DRARRKLEEEERRERKWRQ. Residues 125 to 160 are disordered; sequence DRARRKLEEEERRERKWRQTEQGAKQRSARKEKMTE.

The protein belongs to the HTLV-1 HBZ protein family. Interacts with host ATF4; this interaction inhibits viral RNA transcriptional activation by preventing ATF4 binding to Tax-responsive elements. Interacts with host CREB1; this interaction inhibits host CREB1 transcriptional activity. Interacts with host JUN, JUNB and JUND. Interacts with host EP300.

The protein resides in the host nucleus. Its function is as follows. Contributes to the regulation of viral RNA transcription by interacting with host proteins involved in transcriptional activation such as ATF4, or CREB1, and by inhibiting their activity. Additionally, HBZ suppresses host NF-kappa-B-driven transcription mediated by host RELA as well as transcription of some classical NF-kappa-B target genes, including IL8, IL2RA, IRF4, VCAM1, and VEGFA. The sequence is that of HTLV-1 basic zipper factor (HBZ) from Human T-cell leukemia virus 1 (isolate Melanesia mel5 subtype C) (HTLV-1).